The following is a 287-amino-acid chain: Probable ketose 3-epimerase (287 aa).

Residue E152 is the Proton donor/acceptor of the active site. The Mn(2+) site is built by E152 and D185. H188 is a binding site for substrate. Mn(2+) is bound at residue H211. R217 contacts substrate. The Proton donor/acceptor role is filled by E246. Residue E246 participates in Mn(2+) binding.

It belongs to the hyi family. Mn(2+) is required as a cofactor.

Its function is as follows. Probably catalyzes the epimerization of ketopentoses and/or ketohexoses at the C3 position. The sequence is that of Probable ketose 3-epimerase from Synechocystis sp. (strain ATCC 27184 / PCC 6803 / Kazusa).